The following is a 680-amino-acid chain: DNA ligase (680 aa).

NAD(+)-binding positions include 35-39 (DADFD), 86-87 (SL), and glutamate 111. Lysine 113 functions as the N6-AMP-lysine intermediate in the catalytic mechanism. 4 residues coordinate NAD(+): arginine 134, glutamate 174, lysine 290, and lysine 314. Cysteine 408, cysteine 411, cysteine 427, and cysteine 433 together coordinate Zn(2+). Positions 597-680 (VAEQTLEGLT…RLLNTGSADE (84 aa)) constitute a BRCT domain.

Belongs to the NAD-dependent DNA ligase family. LigA subfamily. Requires Mg(2+) as cofactor. It depends on Mn(2+) as a cofactor.

The catalysed reaction is NAD(+) + (deoxyribonucleotide)n-3'-hydroxyl + 5'-phospho-(deoxyribonucleotide)m = (deoxyribonucleotide)n+m + AMP + beta-nicotinamide D-nucleotide.. DNA ligase that catalyzes the formation of phosphodiester linkages between 5'-phosphoryl and 3'-hydroxyl groups in double-stranded DNA using NAD as a coenzyme and as the energy source for the reaction. It is essential for DNA replication and repair of damaged DNA. The sequence is that of DNA ligase from Corynebacterium glutamicum (strain R).